A 321-amino-acid chain; its full sequence is Phosphatidate cytidylyltransferase, mitochondrial (321 aa).

It belongs to the TAM41 family. The cofactor is Mg(2+). Requires Co(2+) as cofactor. It depends on Cu(2+) as a cofactor.

The protein resides in the mitochondrion inner membrane. The enzyme catalyses a 1,2-diacyl-sn-glycero-3-phosphate + CTP + H(+) = a CDP-1,2-diacyl-sn-glycerol + diphosphate. It functions in the pathway phospholipid metabolism; CDP-diacylglycerol biosynthesis; CDP-diacylglycerol from sn-glycerol 3-phosphate: step 3/3. Catalyzes the formation of CDP-diacylglycerol (CDP-DAG) from phosphatidic acid (PA) in the mitochondrial inner membrane. Required for the biosynthesis of the dimeric phospholipid cardiolipin, which stabilizes supercomplexes of the mitochondrial respiratory chain in the mitochondrial inner membrane. This is Phosphatidate cytidylyltransferase, mitochondrial from Caenorhabditis elegans.